We begin with the raw amino-acid sequence, 547 residues long: uncharacterized protein (547 aa).

The span at Met-1–Ser-18 shows a compositional bias: polar residues. 2 disordered regions span residues Met-1–Pro-41 and Pro-80–Gln-165. Composition is skewed to low complexity over residues Gln-19–Gln-29 and Pro-83–Tyr-94. Over residues Val-121–Pro-135 the composition is skewed to pro residues. The segment covering Lys-136–Gly-160 has biased composition (polar residues). Positions Cys-174 to Cys-201 form a DNA-binding region, zn(2)-C6 fungal-type.

Its subcellular location is the nucleus. This is an uncharacterized protein from Schizosaccharomyces pombe (strain 972 / ATCC 24843) (Fission yeast).